The following is a 485-amino-acid chain: MTDRPTTALPGAQIAGRPVKVGFISLGCAKNLVDTESMIGLLRNTGYQITNRAEEADVLVVNTCGFIDAAKQESVDAILEAAQHKTRGRCQALVVAGCMVPRYGEELAREIPEIDALVGTADYPRIGEVVAGILAGQRVQQISDPDSITDWNFERVLATPGYTAYLKIAEGCDCACAFCSIPLMRGRHRSRPIESIVDEARRLAGMGVRELVVISQDTTYYGLDLYRKPMLARLLRELAQVDGIRWIRIHYSYPTRITDELIEVIVTEPKVLNYLDLPLQHGSNRVLRIMNRPANAEGYLRLVQKLRERVPDICLRSTFIAGHPGETEEDFELLLDFLRACEFDHVGVFAYSQEEGTKAGQMEQLPEEVRLARRDRAMEVQQEIARRRNQLQVGRELEVLVEGRSPQGRGWFVGRCYGQSPGIDGVVLFRAPAGAELKPGDMVQVRITGVQDYDLLGEATEPLTVDGIAQEQDLILPVFHLTRHQ.

Residues 19–135 (VKVGFISLGC…IGEVVAGILA (117 aa)) form the MTTase N-terminal domain. [4Fe-4S] cluster is bound by residues C28, C64, C98, C172, C176, and C179. One can recognise a Radical SAM core domain in the interval 158–387 (ATPGYTAYLK…MEVQQEIARR (230 aa)). A TRAM domain is found at 390-461 (QLQVGRELEV…DYDLLGEATE (72 aa)).

It belongs to the methylthiotransferase family. RimO subfamily. It depends on [4Fe-4S] cluster as a cofactor.

Its subcellular location is the cytoplasm. The enzyme catalyses L-aspartate(89)-[ribosomal protein uS12]-hydrogen + (sulfur carrier)-SH + AH2 + 2 S-adenosyl-L-methionine = 3-methylsulfanyl-L-aspartate(89)-[ribosomal protein uS12]-hydrogen + (sulfur carrier)-H + 5'-deoxyadenosine + L-methionine + A + S-adenosyl-L-homocysteine + 2 H(+). Its function is as follows. Catalyzes the methylthiolation of an aspartic acid residue of ribosomal protein uS12. This is Ribosomal protein uS12 methylthiotransferase RimO from Symbiobacterium thermophilum (strain DSM 24528 / JCM 14929 / IAM 14863 / T).